Consider the following 63-residue polypeptide: Large ribosomal subunit protein uL30 (63 aa).

It belongs to the universal ribosomal protein uL30 family. Part of the 50S ribosomal subunit.

This is Large ribosomal subunit protein uL30 from Rickettsia felis (strain ATCC VR-1525 / URRWXCal2) (Rickettsia azadi).